Here is a 507-residue protein sequence, read N- to C-terminus: Desmethyl-deoxy-podophyllotoxin synthase (507 aa).

A helical transmembrane segment spans residues 1-21 (MEFLSFPLSSALLIILLFMLV). Cysteine 440 is a heme binding site.

It belongs to the cytochrome P450 family. Heme serves as cofactor. Rhizome-specific expression.

Its subcellular location is the membrane. The enzyme catalyses (-)-deoxypodophyllotoxin + reduced [NADPH--hemoprotein reductase] + O2 = (-)-4'-desmethyl-deoxypodophyllotoxin + formaldehyde + oxidized [NADPH--hemoprotein reductase] + H2O + H(+). It functions in the pathway aromatic compound metabolism; phenylpropanoid biosynthesis. Functionally, cytochrome P450 involved in the biosynthesis of etoposide, a chemotherapeutic compound of the topoisomerase inhibitor family. Catalyzes the conversion of deoxypodophyllotoxin to desmethyl-deoxypodophyllotoxin. The protein is Desmethyl-deoxy-podophyllotoxin synthase of Sinopodophyllum hexandrum (Himalayan may apple).